The primary structure comprises 358 residues: Envelope glycoprotein K (358 aa).

Residues 1-33 (MSRVQCLRLAAVIASISHLIFLVWFVCWNSVLE) form the signal peptide. The Extracellular portion of the chain corresponds to 34-141 (NNEDCVYATR…LEMADCMAYL (108 aa)). N-linked (GlcNAc...) asparagine; by host glycans are attached at residues Asn57 and Asn80. A helical transmembrane segment spans residues 142–162 (WFFQVRTATAALLMYLAFLCV). At 163–235 (NRQRRGFGPW…DTLGFYLMHP (73 aa)) the chain is on the cytoplasmic side. A helical transmembrane segment spans residues 236–256 (LALLLRAIETILYFASLVASA). Residues 257–273 (TVLRVNFDPCSVVLPNH) are Extracellular-facing. The helical transmembrane segment at 274-294 (VKVFAWVFVAALGALEVVSAI) threads the bilayer. At 295-323 (DHLRRETRSARDAAAVIRPTNIIAACCAN) the chain is on the cytoplasmic side. A helical transmembrane segment spans residues 324–344 (IISHVLLRMLYGAALVLVVIG). The Extracellular segment spans residues 345–358 (ALKYEREIQTRLLG).

It belongs to the alphaherpesvirinae glycoprotein K family. As to quaternary structure, interacts (via UL20 interaction region) with protein UL20 (via N-terminus); this interaction probably plays a role in the coordinate transport of protein UL20 and gK to the trans-Golgi network (TGN), and is required for the cell surface expression of gK.

The protein localises to the host cell membrane. The protein resides in the host endosome membrane. It localises to the host Golgi apparatus membrane. In terms of biological role, glycoprotein that probably modulates membrane fusion events during secondary envelopment of cytoplasmic capsids that bud into specific trans-Golgi network (TGN)-derived membranes. Also plays a role, together with gB, in virus-induced cell-to-cell fusion (syncytia formation). Seems to block fusion of virions with infected-cell membranes. This Psittacid herpesvirus 1 (isolate Amazon parrot/-/97-0001/1997) (PsHV-1) protein is Envelope glycoprotein K (gK).